Consider the following 539-residue polypeptide: Putative cysteine ligase BshC (539 aa).

Residues 249 to 270 (VETNDEVTNRLNESQAAMKRAG) adopt a coiled-coil conformation.

This sequence belongs to the BshC family.

Its function is as follows. Involved in bacillithiol (BSH) biosynthesis. May catalyze the last step of the pathway, the addition of cysteine to glucosamine malate (GlcN-Mal) to generate BSH. The sequence is that of Putative cysteine ligase BshC from Bacillus pumilus (strain SAFR-032).